The following is a 273-amino-acid chain: Protein FAM210A (273 aa).

Residues 95 to 116 (VLSSSSTSQETPSEKKEEPDPL) form a disordered region. Residues 106–116 (PSEKKEEPDPL) are compositionally biased toward basic and acidic residues. The region spanning 118-230 (DKSISLYQRF…GYMSTPPPVK (113 aa)) is the DUF1279 domain. Residues 138 to 158 (LIPVHLITSGIWFGTFYYASI) traverse the membrane as a helical segment. Residues 233 to 272 (LQGRMEETKELISEKMEETKDRLTEKLQETKEKVSFKKKV) adopt a coiled-coil conformation. The tract at residues 247–273 (KMEETKDRLTEKLQETKEKVSFKKKVE) is disordered.

This sequence belongs to the FAM210 family. In terms of assembly, interacts with ATAD3A.

The protein resides in the membrane. The protein localises to the mitochondrion. It is found in the cytoplasm. May play a role in the structure and strength of both muscle and bone. This is Protein FAM210A (Fam210a) from Rattus norvegicus (Rat).